The sequence spans 306 residues: D-alanine--D-alanine ligase B (306 aa).

Residues E15 and S150 contribute to the active site. The region spanning 101–303 (KLLWQGAGLP…FSQLVVRILE (203 aa)) is the ATP-grasp domain. 134 to 189 (ISALGLPVIVKPSREGSSVGMSKVVAENALQDALRLAFQHDEEVLIEKWLSGPEFT) lines the ATP pocket. Positions 257, 270, and 272 each coordinate Mg(2+). S281 is a catalytic residue.

This sequence belongs to the D-alanine--D-alanine ligase family. In terms of assembly, monomer. Requires Mg(2+) as cofactor. The cofactor is Mn(2+).

It is found in the cytoplasm. It carries out the reaction 2 D-alanine + ATP = D-alanyl-D-alanine + ADP + phosphate + H(+). The protein operates within cell wall biogenesis; peptidoglycan biosynthesis. Functionally, cell wall formation. The chain is D-alanine--D-alanine ligase B (ddlB) from Escherichia coli O157:H7.